Consider the following 163-residue polypeptide: 2-C-methyl-D-erythritol 2,4-cyclodiphosphate synthase (163 aa).

Positions 10 and 12 each coordinate a divalent metal cation. Residues 10 to 12 (DVH) and 36 to 37 (HS) contribute to the 4-CDP-2-C-methyl-D-erythritol 2-phosphate site. His-44 provides a ligand contact to a divalent metal cation. Residues 58 to 60 (DIG), 63 to 67 (FPDND), 134 to 137 (TTTE), Phe-141, and Arg-144 each bind 4-CDP-2-C-methyl-D-erythritol 2-phosphate.

The protein belongs to the IspF family. As to quaternary structure, homotrimer. A divalent metal cation serves as cofactor.

The enzyme catalyses 4-CDP-2-C-methyl-D-erythritol 2-phosphate = 2-C-methyl-D-erythritol 2,4-cyclic diphosphate + CMP. It participates in isoprenoid biosynthesis; isopentenyl diphosphate biosynthesis via DXP pathway; isopentenyl diphosphate from 1-deoxy-D-xylulose 5-phosphate: step 4/6. Involved in the biosynthesis of isopentenyl diphosphate (IPP) and dimethylallyl diphosphate (DMAPP), two major building blocks of isoprenoid compounds. Catalyzes the conversion of 4-diphosphocytidyl-2-C-methyl-D-erythritol 2-phosphate (CDP-ME2P) to 2-C-methyl-D-erythritol 2,4-cyclodiphosphate (ME-CPP) with a corresponding release of cytidine 5-monophosphate (CMP). The polypeptide is 2-C-methyl-D-erythritol 2,4-cyclodiphosphate synthase (Carboxydothermus hydrogenoformans (strain ATCC BAA-161 / DSM 6008 / Z-2901)).